Reading from the N-terminus, the 341-residue chain is Phosphoribosylaminoimidazole-succinocarboxamide synthase, chloroplastic (341 aa).

It belongs to the SAICAR synthetase family.

It is found in the plastid. Its subcellular location is the chloroplast. It catalyses the reaction 5-amino-1-(5-phospho-D-ribosyl)imidazole-4-carboxylate + L-aspartate + ATP = (2S)-2-[5-amino-1-(5-phospho-beta-D-ribosyl)imidazole-4-carboxamido]succinate + ADP + phosphate + 2 H(+). It functions in the pathway purine metabolism; IMP biosynthesis via de novo pathway; 5-amino-1-(5-phospho-D-ribosyl)imidazole-4-carboxamide from 5-amino-1-(5-phospho-D-ribosyl)imidazole-4-carboxylate: step 1/2. The protein is Phosphoribosylaminoimidazole-succinocarboxamide synthase, chloroplastic (PUR7) of Vigna aconitifolia (Moth bean).